The primary structure comprises 308 residues: N-acetylneuraminate lyase (308 aa).

Positions 50 and 51 each coordinate aceneuramate. The active-site Proton donor is Y142. The active-site Schiff-base intermediate with substrate is K172. The aceneuramate site is built by S174, G198, D200, E201, and S217.

Belongs to the DapA family. NanA subfamily. Homotetramer.

The protein resides in the cytoplasm. It catalyses the reaction aceneuramate = aldehydo-N-acetyl-D-mannosamine + pyruvate. It functions in the pathway amino-sugar metabolism; N-acetylneuraminate degradation. Its function is as follows. Catalyzes the cleavage of N-acetylneuraminic acid (sialic acid) to form pyruvate and N-acetylmannosamine via a Schiff base intermediate. It prevents sialic acids from being recycled and returning to the cell surface. Involved in the N-glycolylneuraminic acid (Neu5Gc) degradation pathway. The protein is N-acetylneuraminate lyase of Gallus gallus (Chicken).